We begin with the raw amino-acid sequence, 87 residues long: MAHKKGVGSSKNGRESASKRLGVKIFGGQACKAGNIIVRQRGTEFHPGENIGMGRDHTLFALVDGTVCFKVGRNDRRSVSVVPAVEA.

The protein belongs to the bacterial ribosomal protein bL27 family.

The polypeptide is Large ribosomal subunit protein bL27 (Phocaeicola vulgatus (strain ATCC 8482 / DSM 1447 / JCM 5826 / CCUG 4940 / NBRC 14291 / NCTC 11154) (Bacteroides vulgatus)).